Here is a 452-residue protein sequence, read N- to C-terminus: MMGCFALQTVDTELTADSVEWCPLQGCRHLLACGTYQLRRPEDRPAGPQNKGGMEVKEPQVRLGRLFLYSFNDNNSIHPLVEVQRKDTSAILDMKWCHIPVAGHALLGLADASGSIQLLRLVESEKSHVLEPLSSLALEEQCLALSLDWSTGKTGRAGDQPLKIISSDSTGQLHLLMVNETRPRLQKVASWQAHQFEAWIAAFNYWHPEIVYSGGDDGLLRGWDTRVPGKFLFTSKRHTMGVCSIQSSPHREHILATGSYDEHILLWDTRNMKQPLADTPVQGGVWRIKWHPFHHHLLLAACMHSGFKILNCQKAMEERQEATVLTSHTLPDSLVYGADWSWLLFRSLQRAPSWSFPSNLGTKTADLKGASELPTPCHECREDNDGEGHARPQSGMKPLTEGMRKNGTWLQATAATTRDCGVNPEEADSAFSLLATCSFYDHALHLWEWEGN.

WD repeat units follow at residues 79-130 (PLVE…SHVL), 131-185 (EPLS…RPRL), 186-229 (QKVA…RVPG), 230-273 (KFLF…RNMK), 274-313 (QPLA…LNCQ), 314-403 (KAME…TEGM), and 404-448 (RKNG…HLWE). A Phosphoserine modification is found at Ser-353. Residues 371–402 (SELPTPCHECREDNDGEGHARPQSGMKPLTEG) form a disordered region. Residues 378–390 (HECREDNDGEGHA) show a composition bias toward basic and acidic residues.

This sequence belongs to the DPH7 family. Interacts with INCA1.

It carries out the reaction diphthine methyl ester-[translation elongation factor 2] + H2O = diphthine-[translation elongation factor 2] + methanol + H(+). It participates in protein modification; peptidyl-diphthamide biosynthesis. Functionally, catalyzes the demethylation of diphthine methyl ester to form diphthine, an intermediate diphthamide biosynthesis, a post-translational modification of histidine which occurs in translation elongation factor 2 (EEF2) which can be ADP-ribosylated by diphtheria toxin and by Pseudomonas exotoxin A (Eta). The protein is Diphthine methyltransferase (DPH7) of Homo sapiens (Human).